Reading from the N-terminus, the 357-residue chain is UDP-arabinopyranose mutase 1 (357 aa).

V2 is modified (N-acetylvaline). The DXD motif motif lies at 110-112 (DDD). The N-linked (Glc...) arginine glycan is linked to R158.

Belongs to the RGP family. In terms of assembly, heteromers with RGP2, RGP3, RGP4 and RGP5. The cofactor is Mn(2+). It depends on Mg(2+) as a cofactor. In terms of processing, reversibly glycosylated in vitro by UDP-glucose, UDP-xylose and UDP-galactose, but not UDP-mannose. In terms of tissue distribution, predominantly expressed in shoot and root apical meristems. Expressed in epidermal cells of leaves, inflorescence stems and seed coat. Expressed in pollen.

Its subcellular location is the cytoplasm. The protein resides in the cytosol. The protein localises to the golgi apparatus. The enzyme catalyses UDP-beta-L-arabinofuranose = UDP-beta-L-arabinopyranose. UDP-L-arabinose mutase involved in the biosynthesis of cell wall non-cellulosic polysaccharides. Catalyzes the interconvertion of UDP-L-arabinopyranose (UDP-Arap) and UDP-L-arabinofuranose (UDP-Araf) in vitro. Preferentially catalyzes the formation of UDP-Arap from UDP-Araf. At thermodynamic equilibrium in vitro the ratio of the pyranose form over the furanose form is 95:5. Is not active on other UDP-sugars (UDP-Gal, UDP-Xyl, UDP-Glc, GDP-Man and GDP-Fuc). Functions redundantly with RGP2 and is essential for proper cell walls and pollen development. Probably involved in the formation of the pectocellulosic cell wall layer intine. Is probably active as heteromer in vivo. This Arabidopsis thaliana (Mouse-ear cress) protein is UDP-arabinopyranose mutase 1.